A 27-amino-acid chain; its full sequence is Ganodermin (27 aa).

Its function is as follows. Has antifungal activity against B.cinera, F.oxysporum and P.piricola with IC(50) values of 15.2 uM, 12.4 uM and 18.1 uM, respectively. Lacks hemagglutinating activity towards rabbit erythrocytes. Lacks deoxyribonuclease, ribonuclease and protease inhibitory activities. This Ganoderma lucidum (Ling zhi medicinal fungus) protein is Ganodermin.